Here is a 98-residue protein sequence, read N- to C-terminus: NADH-ubiquinone oxidoreductase chain 4L (98 aa).

3 consecutive transmembrane segments (helical) span residues 2–22 (QMTM…LLMF), 26–46 (FMSS…LMSI), and 59–79 (FPLV…SLLV).

It belongs to the complex I subunit 4L family. Core subunit of respiratory chain NADH dehydrogenase (Complex I) which is composed of 45 different subunits.

It localises to the mitochondrion inner membrane. The catalysed reaction is a ubiquinone + NADH + 5 H(+)(in) = a ubiquinol + NAD(+) + 4 H(+)(out). Its function is as follows. Core subunit of the mitochondrial membrane respiratory chain NADH dehydrogenase (Complex I) which catalyzes electron transfer from NADH through the respiratory chain, using ubiquinone as an electron acceptor. Part of the enzyme membrane arm which is embedded in the lipid bilayer and involved in proton translocation. This Echinosorex gymnura (Moon rat) protein is NADH-ubiquinone oxidoreductase chain 4L (MT-ND4L).